A 360-amino-acid chain; its full sequence is Peptide chain release factor 1 (360 aa).

N5-methylglutamine is present on Q235. Basic and acidic residues predominate over residues 291-308 (ASERRNLLGTGDRSDRNR). Positions 291-312 (ASERRNLLGTGDRSDRNRTYNF) are disordered.

Belongs to the prokaryotic/mitochondrial release factor family. In terms of processing, methylated by PrmC. Methylation increases the termination efficiency of RF1.

The protein localises to the cytoplasm. In terms of biological role, peptide chain release factor 1 directs the termination of translation in response to the peptide chain termination codons UAG and UAA. This chain is Peptide chain release factor 1, found in Yersinia pseudotuberculosis serotype I (strain IP32953).